The following is a 466-amino-acid chain: Chromosomal replication initiator protein DnaA (466 aa).

The segment at 1 to 86 is domain I, interacts with DnaA modulators; sequence MSLSLWQQCL…EVGTKPVTQT (86 aa). The domain II stretch occupies residues 86-129; the sequence is TLKTPVHNVVAPTQTTTAQPQRVAPAARSGWDNVPAPAEPTYRS. The domain III, AAA+ region stretch occupies residues 130-346; sequence NVNVKHTFDN…GALNRVIANA (217 aa). The ATP site is built by G174, G176, K177, and T178. Residues 347 to 466 form a domain IV, binds dsDNA region; the sequence is NFTGRAITID…FSNLIRTLSS (120 aa).

The protein belongs to the DnaA family. In terms of assembly, oligomerizes as a right-handed, spiral filament on DNA at oriC.

It localises to the cytoplasm. Its function is as follows. Plays an essential role in the initiation and regulation of chromosomal replication. ATP-DnaA binds to the origin of replication (oriC) to initiate formation of the DNA replication initiation complex once per cell cycle. Binds the DnaA box (a 9 base pair repeat at the origin) and separates the double-stranded (ds)DNA. Forms a right-handed helical filament on oriC DNA; dsDNA binds to the exterior of the filament while single-stranded (ss)DNA is stabiized in the filament's interior. The ATP-DnaA-oriC complex binds and stabilizes one strand of the AT-rich DNA unwinding element (DUE), permitting loading of DNA polymerase. After initiation quickly degrades to an ADP-DnaA complex that is not apt for DNA replication. Binds acidic phospholipids. This chain is Chromosomal replication initiator protein DnaA, found in Salmonella gallinarum (strain 287/91 / NCTC 13346).